Consider the following 205-residue polypeptide: Large ribosomal subunit protein uL4 (205 aa).

Positions 44 to 77 are disordered; the sequence is KRQGTSKVKNRSAVRGGGKKPWRQKGTGRARQGS. Basic residues predominate over residues 51-71; the sequence is VKNRSAVRGGGKKPWRQKGTG.

The protein belongs to the universal ribosomal protein uL4 family. As to quaternary structure, part of the 50S ribosomal subunit.

One of the primary rRNA binding proteins, this protein initially binds near the 5'-end of the 23S rRNA. It is important during the early stages of 50S assembly. It makes multiple contacts with different domains of the 23S rRNA in the assembled 50S subunit and ribosome. Its function is as follows. Forms part of the polypeptide exit tunnel. This Lactobacillus delbrueckii subsp. bulgaricus (strain ATCC 11842 / DSM 20081 / BCRC 10696 / JCM 1002 / NBRC 13953 / NCIMB 11778 / NCTC 12712 / WDCM 00102 / Lb 14) protein is Large ribosomal subunit protein uL4.